Reading from the N-terminus, the 295-residue chain is Protoheme IX farnesyltransferase 2 (295 aa).

9 helical membrane passes run 9 to 29 (ITKP…FFLA), 36 to 56 (LAVF…GCVF), 80 to 100 (LISL…GVAL), 108 to 128 (LAAL…SLYL), 135 to 155 (GTLV…VAVT), 163 to 183 (LTLL…IAIF), 209 to 229 (ILIY…SGYA), 230 to 250 (GMSY…MAWT), and 265 to 285 (FVFS…DFKV).

Belongs to the UbiA prenyltransferase family. Protoheme IX farnesyltransferase subfamily.

Its subcellular location is the cell inner membrane. The catalysed reaction is heme b + (2E,6E)-farnesyl diphosphate + H2O = Fe(II)-heme o + diphosphate. It participates in porphyrin-containing compound metabolism; heme O biosynthesis; heme O from protoheme: step 1/1. Its function is as follows. Converts heme B (protoheme IX) to heme O by substitution of the vinyl group on carbon 2 of heme B porphyrin ring with a hydroxyethyl farnesyl side group. This is Protoheme IX farnesyltransferase 2 from Pseudomonas fluorescens (strain Pf0-1).